We begin with the raw amino-acid sequence, 496 residues long: Glycerol kinase (496 aa).

An ADP-binding site is contributed by threonine 12. Positions 12, 13, and 14 each coordinate ATP. Residue threonine 12 participates in sn-glycerol 3-phosphate binding. Arginine 16 serves as a coordination point for ADP. Sn-glycerol 3-phosphate-binding residues include arginine 82, glutamate 83, and tyrosine 134. Residues arginine 82, glutamate 83, and tyrosine 134 each coordinate glycerol. Histidine 230 carries the phosphohistidine; by HPr modification. Aspartate 244 serves as a coordination point for sn-glycerol 3-phosphate. Positions 244 and 245 each coordinate glycerol. ADP-binding residues include threonine 266 and glycine 309. ATP is bound by residues threonine 266, glycine 309, glutamine 313, and glycine 410. Positions 410 and 414 each coordinate ADP.

This sequence belongs to the FGGY kinase family. In terms of assembly, homotetramer and homodimer (in equilibrium). Post-translationally, the phosphoenolpyruvate-dependent sugar phosphotransferase system (PTS), including enzyme I, and histidine-containing protein (HPr) are required for the phosphorylation, which leads to the activation of the enzyme.

The catalysed reaction is glycerol + ATP = sn-glycerol 3-phosphate + ADP + H(+). Its pathway is polyol metabolism; glycerol degradation via glycerol kinase pathway; sn-glycerol 3-phosphate from glycerol: step 1/1. With respect to regulation, activated by phosphorylation and inhibited by fructose 1,6-bisphosphate (FBP). In terms of biological role, key enzyme in the regulation of glycerol uptake and metabolism. Catalyzes the phosphorylation of glycerol to yield sn-glycerol 3-phosphate. This Bacillus licheniformis (strain ATCC 14580 / DSM 13 / JCM 2505 / CCUG 7422 / NBRC 12200 / NCIMB 9375 / NCTC 10341 / NRRL NRS-1264 / Gibson 46) protein is Glycerol kinase.